The sequence spans 337 residues: MAEVEKLKQLQLQREALKKRGEQKVKETEKKRTEESVQSVCPECGSRQLVHDYERAELVCQNCGLVLDEEFIDRGPEWRAFDHDQRMKRSRVGAPMTFTIHDKGLSTMIDWRNRDSYGRAISSKNRAQLYRLRKWQRRIRVSNATERNLAFALSELDRMASALGLPRNVRETAAVVYRDAVDKNLIRGRSIEGVAAAALYAACRQCSVPRTLDEIAEVSRVSRKEIGRTYRFISRELGLKLLPTSPIDYVPRFCSGLNLKGEVQSRAVEILRQAGERELTSGRGPTGVAAAAIYISSILGGERRTQREVAEVAGVTEVTIRNRYKELAEKLDIEIIL.

A TFIIB-type zinc finger spans residues serine 36 to aspartate 68. Zn(2+) is bound by residues cysteine 41, cysteine 44, cysteine 60, and cysteine 63. Repeat copies occupy residues serine 154–leucine 237 and aspartate 248–glutamate 329.

The protein belongs to the TFIIB family.

Functionally, stabilizes TBP binding to an archaeal box-A promoter. Also responsible for recruiting RNA polymerase II to the pre-initiation complex (DNA-TBP-TFIIB). This is Transcription initiation factor IIB from Methanoculleus marisnigri (strain ATCC 35101 / DSM 1498 / JR1).